The following is a 315-amino-acid chain: ATP synthase gamma chain (315 aa).

It belongs to the ATPase gamma chain family. F-type ATPases have 2 components, CF(1) - the catalytic core - and CF(0) - the membrane proton channel. CF(1) has five subunits: alpha(3), beta(3), gamma(1), delta(1), epsilon(1). CF(0) has three main subunits: a, b and c.

It localises to the cellular thylakoid membrane. Its function is as follows. Produces ATP from ADP in the presence of a proton gradient across the membrane. The gamma chain is believed to be important in regulating ATPase activity and the flow of protons through the CF(0) complex. In Synechococcus sp. (strain PCC 6716), this protein is ATP synthase gamma chain.